A 358-amino-acid chain; its full sequence is Histidinol-phosphate aminotransferase (358 aa).

An N6-(pyridoxal phosphate)lysine modification is found at Lys-211.

It belongs to the class-II pyridoxal-phosphate-dependent aminotransferase family. Histidinol-phosphate aminotransferase subfamily. Homodimer. Requires pyridoxal 5'-phosphate as cofactor.

It carries out the reaction L-histidinol phosphate + 2-oxoglutarate = 3-(imidazol-4-yl)-2-oxopropyl phosphate + L-glutamate. The protein operates within amino-acid biosynthesis; L-histidine biosynthesis; L-histidine from 5-phospho-alpha-D-ribose 1-diphosphate: step 7/9. The protein is Histidinol-phosphate aminotransferase of Blochmanniella pennsylvanica (strain BPEN).